The following is a 530-amino-acid chain: Autoinducer-2 kinase (530 aa).

This sequence belongs to the FGGY kinase family.

The protein resides in the cytoplasm. The catalysed reaction is (S)-4,5-dihydroxypentane-2,3-dione + ATP = (2S)-2-hydroxy-3,4-dioxopentyl phosphate + ADP + H(+). Its function is as follows. Catalyzes the phosphorylation of autoinducer-2 (AI-2) to phospho-AI-2, which subsequently inactivates the transcriptional regulator LsrR and leads to the transcription of the lsr operon. Phosphorylates the ring-open form of (S)-4,5-dihydroxypentane-2,3-dione (DPD), which is the precursor to all AI-2 signaling molecules, at the C5 position. This Photorhabdus laumondii subsp. laumondii (strain DSM 15139 / CIP 105565 / TT01) (Photorhabdus luminescens subsp. laumondii) protein is Autoinducer-2 kinase.